A 161-amino-acid chain; its full sequence is DNA endonuclease I-CvuI (161 aa).

The protein belongs to the LAGLIDADG endonuclease family.

It is found in the plastid. It localises to the chloroplast. Functionally, probable endonuclease involved in intron homing. The polypeptide is DNA endonuclease I-CvuI (Chlorella vulgaris (Green alga)).